Consider the following 124-residue polypeptide: Small ribosomal subunit protein uS13 (124 aa).

The segment covering 103–117 (KCNARTRKGPRKTVA) has biased composition (basic residues). The tract at residues 103–124 (KCNARTRKGPRKTVANKKIETK) is disordered.

The protein belongs to the universal ribosomal protein uS13 family. Part of the 30S ribosomal subunit. Forms a loose heterodimer with protein S19. Forms two bridges to the 50S subunit in the 70S ribosome.

Located at the top of the head of the 30S subunit, it contacts several helices of the 16S rRNA. In the 70S ribosome it contacts the 23S rRNA (bridge B1a) and protein L5 of the 50S subunit (bridge B1b), connecting the 2 subunits; these bridges are implicated in subunit movement. Contacts the tRNAs in the A and P-sites. In Malacoplasma penetrans (strain HF-2) (Mycoplasma penetrans), this protein is Small ribosomal subunit protein uS13.